Here is a 101-residue protein sequence, read N- to C-terminus: Apolipoprotein C-II (101 aa).

The N-terminal stretch at 1 to 26 (MGTRYFLALFLILLVLGFKVQGVAMA) is a signal peptide. The segment at 66–74 (TMDEKIRDI) is lipid binding. Residues 78 to 101 (STAAVTTYAGIFTDQLLSLLKGDQ) form a lipoprotein lipase cofactor region.

Belongs to the apolipoprotein C2 family. In terms of processing, proapolipoprotein C-II is synthesized as a sialic acid containing glycoprotein which is subsequently desialylated prior to its proteolytic processing. Post-translationally, proapolipoprotein C-II undergoes proteolytic cleavage of its N-terminal hexapeptide to generate apolipoprotein C-II. In bovine, proapolipoprotein C-II was found to be the minor form whereas apolipoprotein C-II was found to be the major form in plasma.

The protein resides in the secreted. In terms of biological role, component of chylomicrons, very low-density lipoproteins (VLDL), low-density lipoproteins (LDL), and high-density lipoproteins (HDL) in plasma. Plays an important role in lipoprotein metabolism as an activator of lipoprotein lipase. Both proapolipoprotein C-II and apolipoprotein C-II can activate lipoprotein lipase. This Camelus dromedarius (Dromedary) protein is Apolipoprotein C-II (APOC2).